We begin with the raw amino-acid sequence, 464 residues long: 3-isopropylmalate dehydratase large subunit (464 aa).

Cys337, Cys397, and Cys400 together coordinate [4Fe-4S] cluster.

The protein belongs to the aconitase/IPM isomerase family. LeuC type 1 subfamily. As to quaternary structure, heterodimer of LeuC and LeuD. It depends on [4Fe-4S] cluster as a cofactor.

The enzyme catalyses (2R,3S)-3-isopropylmalate = (2S)-2-isopropylmalate. Its pathway is amino-acid biosynthesis; L-leucine biosynthesis; L-leucine from 3-methyl-2-oxobutanoate: step 2/4. In terms of biological role, catalyzes the isomerization between 2-isopropylmalate and 3-isopropylmalate, via the formation of 2-isopropylmaleate. The chain is 3-isopropylmalate dehydratase large subunit from Bacillus cereus (strain B4264).